A 112-amino-acid chain; its full sequence is 2Fe-2S ferredoxin (112 aa).

In terms of domain architecture, 2Fe-2S ferredoxin-type spans 1 to 104 (MPQIVILPHA…DLVVEIPKYT (104 aa)). Positions 42, 48, 51, and 87 each coordinate [2Fe-2S] cluster.

The protein belongs to the adrenodoxin/putidaredoxin family. The cofactor is [2Fe-2S] cluster.

Ferredoxin are iron-sulfur proteins that transfer electrons in a wide variety of metabolic reactions. The sequence is that of 2Fe-2S ferredoxin (fdx) from Pseudomonas aeruginosa (strain ATCC 15692 / DSM 22644 / CIP 104116 / JCM 14847 / LMG 12228 / 1C / PRS 101 / PAO1).